The chain runs to 130 residues: Small ribosomal subunit protein uS11c (130 aa).

This sequence belongs to the universal ribosomal protein uS11 family. In terms of assembly, part of the 30S ribosomal subunit.

The protein resides in the plastid. It is found in the chloroplast. The chain is Small ribosomal subunit protein uS11c from Chara vulgaris (Common stonewort).